We begin with the raw amino-acid sequence, 303 residues long: Eukaryotic translation initiation factor 3 subunit G (303 aa).

Disordered regions lie at residues 1 to 32, 81 to 100, 105 to 126, and 181 to 215; these read MAAV…QTIV, GLSA…VGEN, PSAN…NAMK, and GAAG…AGGK. Residues 109–126 show a composition bias toward basic and acidic residues; it reads WRKDQKDESKDANANAMK. The RRM domain occupies 223 to 301; that stretch reads ATLRVTNVSE…LILRVEFAKK (79 aa).

This sequence belongs to the eIF-3 subunit G family. In terms of assembly, component of the eukaryotic translation initiation factor 3 (eIF-3) complex.

It is found in the cytoplasm. Functionally, RNA-binding component of the eukaryotic translation initiation factor 3 (eIF-3) complex, which is involved in protein synthesis of a specialized repertoire of mRNAs and, together with other initiation factors, stimulates binding of mRNA and methionyl-tRNAi to the 40S ribosome. The eIF-3 complex specifically targets and initiates translation of a subset of mRNAs involved in cell proliferation. This subunit can bind 18S rRNA. The chain is Eukaryotic translation initiation factor 3 subunit G from Pyricularia oryzae (strain 70-15 / ATCC MYA-4617 / FGSC 8958) (Rice blast fungus).